A 211-amino-acid chain; its full sequence is NADH-quinone oxidoreductase subunit I 1 (211 aa).

2 4Fe-4S ferredoxin-type domains span residues 50-80 (LNRH…VEGA) and 96-125 (RVYQ…MTNE). Residues Cys60, Cys63, Cys66, Cys70, Cys105, Cys108, Cys111, and Cys115 each contribute to the [4Fe-4S] cluster site. Residues 192-211 (QEGDSTFGATEPASEEVIRR) are disordered.

It belongs to the complex I 23 kDa subunit family. As to quaternary structure, NDH-1 is composed of 14 different subunits. Subunits NuoA, H, J, K, L, M, N constitute the membrane sector of the complex. It depends on [4Fe-4S] cluster as a cofactor.

It localises to the cell membrane. The catalysed reaction is a quinone + NADH + 5 H(+)(in) = a quinol + NAD(+) + 4 H(+)(out). NDH-1 shuttles electrons from NADH, via FMN and iron-sulfur (Fe-S) centers, to quinones in the respiratory chain. The immediate electron acceptor for the enzyme in this species is believed to be ubiquinone. Couples the redox reaction to proton translocation (for every two electrons transferred, four hydrogen ions are translocated across the cytoplasmic membrane), and thus conserves the redox energy in a proton gradient. The polypeptide is NADH-quinone oxidoreductase subunit I 1 (Streptomyces coelicolor (strain ATCC BAA-471 / A3(2) / M145)).